The primary structure comprises 1001 residues: Transcription-repair-coupling factor (1001 aa).

Residues 499 to 658 enclose the Helicase ATP-binding domain; it reads DLSSHRVMDR…LSQIKGISSL (160 aa). 512 to 519 serves as a coordination point for ATP; it reads GDVGFGKT. Positions 611 to 614 match the DEEH box motif; the sequence is DEEH. The Helicase C-terminal domain occupies 679-835; that stretch reads LLKEIIYREL…SIAYHDLEIR (157 aa).

It in the N-terminal section; belongs to the UvrB family. The protein in the C-terminal section; belongs to the helicase family. RecG subfamily.

It is found in the cytoplasm. In terms of biological role, couples transcription and DNA repair by recognizing RNA polymerase (RNAP) stalled at DNA lesions. Mediates ATP-dependent release of RNAP and its truncated transcript from the DNA, and recruitment of nucleotide excision repair machinery to the damaged site. The protein is Transcription-repair-coupling factor of Helicobacter pylori (strain J99 / ATCC 700824) (Campylobacter pylori J99).